A 190-amino-acid chain; its full sequence is Dirigent protein 15 (190 aa).

An N-terminal signal peptide occupies residues 1–19; it reads MKSTLIIFFTLCLSMAVMA. 2 N-linked (GlcNAc...) asparagine glycosylation sites follow: Asn63 and Asn128.

The protein belongs to the plant dirigent protein family. In terms of assembly, homodimer.

The protein localises to the secreted. Its subcellular location is the extracellular space. It localises to the apoplast. Its function is as follows. Dirigent proteins impart stereoselectivity on the phenoxy radical-coupling reaction, yielding optically active lignans from two molecules of coniferyl alcohol in the biosynthesis of lignans, flavonolignans, and alkaloids and thus plays a central role in plant secondary metabolism. This chain is Dirigent protein 15 (DIR15), found in Arabidopsis thaliana (Mouse-ear cress).